The sequence spans 252 residues: 1-(5-phosphoribosyl)-5-[(5-phosphoribosylamino)methylideneamino] imidazole-4-carboxamide isomerase (252 aa).

Catalysis depends on Asp-10, which acts as the Proton acceptor. Asp-129 functions as the Proton donor in the catalytic mechanism.

Belongs to the HisA/HisF family.

It is found in the cytoplasm. The enzyme catalyses 1-(5-phospho-beta-D-ribosyl)-5-[(5-phospho-beta-D-ribosylamino)methylideneamino]imidazole-4-carboxamide = 5-[(5-phospho-1-deoxy-D-ribulos-1-ylimino)methylamino]-1-(5-phospho-beta-D-ribosyl)imidazole-4-carboxamide. Its pathway is amino-acid biosynthesis; L-histidine biosynthesis; L-histidine from 5-phospho-alpha-D-ribose 1-diphosphate: step 4/9. This is 1-(5-phosphoribosyl)-5-[(5-phosphoribosylamino)methylideneamino] imidazole-4-carboxamide isomerase from Frankia casuarinae (strain DSM 45818 / CECT 9043 / HFP020203 / CcI3).